Consider the following 94-residue polypeptide: Integration host factor subunit beta (94 aa).

It belongs to the bacterial histone-like protein family. In terms of assembly, heterodimer of an alpha and a beta chain.

Functionally, this protein is one of the two subunits of integration host factor, a specific DNA-binding protein that functions in genetic recombination as well as in transcriptional and translational control. The protein is Integration host factor subunit beta of Xanthobacter autotrophicus (strain ATCC BAA-1158 / Py2).